The following is a 228-amino-acid chain: Vesicle transport protein SEC20 (228 aa).

Residues 1-199 lie on the Cytoplasmic side of the membrane; the sequence is MAAPQDVHVR…LITKYNRREL (199 aa). Residues 37-90 adopt a coiled-coil conformation; that stretch reads LSELTELNTKVKEKFQQLKQRIQELEQSAREQDKESEKQLLLQEVENHKKQMLS. Residues 200–220 form a helical; Anchor for type IV membrane protein membrane-spanning segment; the sequence is TDKLLIFLALALFLATVLYIV. The Lumenal segment spans residues 221–228; the sequence is KKRLFPFL.

This sequence belongs to the SEC20 family. Component of a SNARE complex consisting of STX18, USE1L, BNIP1/SEC20L and SEC22B. Interacts directly with STX18, RINT1/TIP20L and NAPA. Interacts with ZW10 through RINT1. Interacts with BCL2. Interacts with RNF186. Interacts with RNF185. Interacts with SQSTM1; increased by 'Lys-63'-linked polyubiquitination of BNIP1. In terms of processing, polyubiquitinated. 'Lys-63'-linked polyubiquitination by RNF185 increases the interaction with the autophagy receptor SQSTM1. Undergoes 'Lys-29'- and 'Lys-63'-linked polyubiquitination by RNF186 that may regulate BNIP1 localization to the mitochondrion.

Its subcellular location is the endoplasmic reticulum membrane. It is found in the mitochondrion membrane. As part of a SNARE complex may be involved in endoplasmic reticulum membranes fusion and be required for the maintenance of endoplasmic reticulum organization. Also plays a role in apoptosis. It is for instance required for endoplasmic reticulum stress-induced apoptosis. As a substrate of RNF185 interacting with SQSTM1, might also be involved in mitochondrial autophagy. This chain is Vesicle transport protein SEC20, found in Mus musculus (Mouse).